The sequence spans 110 residues: Disintegrin jerdostatin (110 aa).

The N-terminal stretch at 1-20 is a signal peptide; sequence MIQVLLVTICLAVFPYQVSS. Residues 21–67 constitute a propeptide that is removed on maturation; the sequence is KTLKSGSVNEYEVVNPGTVTGLPKGAVKQPEKKHEPMKGNTLQKLPL. Positions 27–110 constitute a Disintegrin domain; the sequence is SVNEYEVVNP…CECPSYPGNG (84 aa). 4 disulfide bridges follow: C68-C77, C73-C96, C74-C101, and C86-C103. The Cell attachment site; atypical (RTS) motif lies at 88-90; sequence RTS.

It belongs to the disintegrin family. Short disintegrin subfamily. As to quaternary structure, monomer. Post-translationally, two conformers are found, they may differ by their disulfide bond connectivities. Conformer 2 is 33 times less active than conformer 1. Conformer 2 may represent a non-native protein. In terms of processing, the C-terminal dipeptide may be post-translationally removed, as seen in disintegrins that possess a KTS integrin-binding motif. As to expression, expressed by the venom gland.

The protein resides in the secreted. In terms of biological role, recombinant protein inhibits the adhesion of alpha-1/beta-1-K562 (ITGA1/ITGB1) cells to collagen IV with an IC(50) of 80 nM. The polypeptide is Disintegrin jerdostatin (Protobothrops jerdonii (Jerdon's pitviper)).